The chain runs to 157 residues: 3-dehydroquinate dehydratase (157 aa).

Catalysis depends on tyrosine 24, which acts as the Proton acceptor. The substrate site is built by asparagine 75, histidine 81, and aspartate 88. Histidine 101 serves as the catalytic Proton donor. Substrate is bound by residues 102–103 (LS) and arginine 112.

Belongs to the type-II 3-dehydroquinase family. Homododecamer.

It carries out the reaction 3-dehydroquinate = 3-dehydroshikimate + H2O. Its pathway is metabolic intermediate biosynthesis; chorismate biosynthesis; chorismate from D-erythrose 4-phosphate and phosphoenolpyruvate: step 3/7. Catalyzes a trans-dehydration via an enolate intermediate. This is 3-dehydroquinate dehydratase from Brucella melitensis biotype 1 (strain ATCC 23456 / CCUG 17765 / NCTC 10094 / 16M).